A 636-amino-acid chain; its full sequence is uncharacterized protein (636 aa).

3 helical membrane passes run 12-32 (AVIY…FGSI), 34-54 (IMHL…TTTG), and 75-95 (IGAG…FMSF). Positions 112-231 (KNHFILCGFG…KKAGANRIIS (120 aa)) constitute an RCK N-terminal domain.

It localises to the cell membrane. This is an uncharacterized protein from Methanothermus fervidus (strain ATCC 43054 / DSM 2088 / JCM 10308 / V24 S).